Here is a 288-residue protein sequence, read N- to C-terminus: Energy-coupling factor transporter ATP-binding protein EcfA2 (288 aa).

An ABC transporter domain is found at 3 to 245 (IIVKNLTHIY…NASKLKDIGL (243 aa)). 40-47 (GHTGSGKS) is a binding site for ATP.

This sequence belongs to the ABC transporter superfamily. Energy-coupling factor EcfA family. In terms of assembly, forms a stable energy-coupling factor (ECF) transporter complex composed of 2 membrane-embedded substrate-binding proteins (S component), 2 ATP-binding proteins (A component) and 2 transmembrane proteins (T component).

It is found in the cell membrane. Its function is as follows. ATP-binding (A) component of a common energy-coupling factor (ECF) ABC-transporter complex. Unlike classic ABC transporters this ECF transporter provides the energy necessary to transport a number of different substrates. This Clostridioides difficile (strain 630) (Peptoclostridium difficile) protein is Energy-coupling factor transporter ATP-binding protein EcfA2.